Consider the following 443-residue polypeptide: Cyclic GMP-AMP synthase (443 aa).

Ser61 is a binding site for ATP. Catalysis depends on residues Asp78 and Asp80. Asp80 serves as a coordination point for Mg(2+). Asn124 is a binding site for ATP. The active site involves Asp138. Asp138 provides a ligand contact to Mg(2+). Leu208 is a binding site for ATP.

The protein belongs to the CD-NTase family. B06 subfamily. Mg(2+) is required as a cofactor.

The catalysed reaction is GTP + ATP = 3',3'-cGAMP + 2 diphosphate. It carries out the reaction UTP + ATP = 3',3'-cUAMP + 2 diphosphate. The enzyme catalyses 2 ATP = 3',3'-c-di-AMP + 2 diphosphate. It catalyses the reaction 2 GTP = 3',3'-c-di-GMP + 2 diphosphate. The catalysed reaction is UTP + GTP = 3',3'-cGMP-UMP + 2 diphosphate. Its function is as follows. Cyclic nucleotide synthase (second messenger synthase) of a CBASS antivirus system. CBASS (cyclic oligonucleotide-based antiphage signaling system) provides immunity against bacteriophages. The CD-NTase protein (CdnB, this protein) synthesizes cyclic nucleotides in response to infection; these serve as specific second messenger signals. The signals activate a diverse range of effectors, leading to bacterial cell death and thus abortive phage infection. The effector protein for this system is membrane protein Cap15. Catalyzes the synthesis of 3',3'-cyclic GMP-AMP (3'3'-cGAMP) from GTP and ATP, a second messenger in cell signal transduction. Also makes cyclic UMP-AMP, cyclic UMP-GMP, cyclic di-AMP and cyclic-di-GMP. Functionally, protects E.coli against phage infection. When the CBASS operon (cdnB-cap15) is introduced in E.coli MG1655 there is about 100-fold protection against phage T2 and about 10-fold protection against phage T5 and T6. The sequence is that of Cyclic GMP-AMP synthase from Escherichia albertii.